Consider the following 144-residue polypeptide: Large ribosomal subunit protein uL15 (144 aa).

The segment at 1 to 54 is disordered; it reads MRLNTIKPGEGSKKTAKRVGRGIGSGLGKTCGRGHKGQKSRSGGFHKVGFEGGQ. Positions 21–31 are enriched in gly residues; that stretch reads RGIGSGLGKTC.

The protein belongs to the universal ribosomal protein uL15 family. As to quaternary structure, part of the 50S ribosomal subunit.

Functionally, binds to the 23S rRNA. The polypeptide is Large ribosomal subunit protein uL15 (Dechloromonas aromatica (strain RCB)).